Here is a 449-residue protein sequence, read N- to C-terminus: Heterogeneous nuclear ribonucleoprotein H2 (449 aa).

An N-acetylmethionine modification is found at Met1. The residue at position 2 (Met2) is an N-acetylmethionine; in Heterogeneous nuclear ribonucleoprotein H2, N-terminally processed. The RRM 1 domain maps to 11-90; that stretch reads FVVKVRGLPW…RYVEVFKSNS (80 aa). Ser23 is modified (phosphoserine). Lys35 participates in a covalent cross-link: Glycyl lysine isopeptide (Lys-Gly) (interchain with G-Cter in SUMO2). Ser54 and Ser63 each carry phosphoserine. Lys87 participates in a covalent cross-link: Glycyl lysine isopeptide (Lys-Gly) (interchain with G-Cter in SUMO2). Ser90 carries the post-translational modification Phosphoserine. Lys98 participates in a covalent cross-link: Glycyl lysine isopeptide (Lys-Gly) (interchain with G-Cter in SUMO2). An RRM 2 domain is found at 111–188; sequence GFVRLRGLPF…RYIEIFKSSR (78 aa). Arg233 bears the Dimethylated arginine; alternate mark. Omega-N-methylarginine; alternate is present on Arg233. The stretch at 234 to 249 is one 1-1 repeat; that stretch reads GAYGGGYGGYDDYGGY. The tract at residues 234–433 is 2 X 16 AA Gly-rich approximate repeats; the sequence is GAYGGGYGGY…YGGQSSMSGY (200 aa). Tyr246 carries the phosphotyrosine modification. Residues 289 to 364 enclose the RRM 3 domain; sequence HCVHMRGLPY…RYVELFLNST (76 aa). Ser310 carries the post-translational modification Phosphoserine. Tandem repeats lie at residues 354 to 372, 374 to 392, and 418 to 433. Residues 354–392 are 2 X 19 AA perfect repeats; that stretch reads HRYVELFLNSTAGTSGGAYDHSYVELFLNSTAGASGGAY.

As to quaternary structure, component of a ribonucleoprotein complex containing mRNAs and RNA-binding proteins including DDX5, HNRNPH2 and SRSF1 as well as splicing regulator ARVCF. Interacts with TXNL4/DIM1. Expressed ubiquitously.

It localises to the nucleus. The protein resides in the nucleoplasm. Functionally, this protein is a component of the heterogeneous nuclear ribonucleoprotein (hnRNP) complexes which provide the substrate for the processing events that pre-mRNAs undergo before becoming functional, translatable mRNAs in the cytoplasm. Binds poly(RG). The chain is Heterogeneous nuclear ribonucleoprotein H2 (HNRNPH2) from Homo sapiens (Human).